The sequence spans 397 residues: MNIHEYQAKALLAQYGAPVSDGRVVTKAEDAKTAAGEMDGPLWVVKAQIHAGGRGKGKFKEADAGEAGGVRLAKSAQEAADEAKKMLGRTLVTHQTGPVGKQVNRIYIEDGSGIETEMYLALLVDRQSSRISFVCSTEGGMDIEEVAASTPEKILSFSVDPATGYQPYHGRRVAFSLGLEGQQVKQCVKLMGQLFTAFQEKDMEMLEINPLIVTDEGNLKVLDAKVSFDGNAVYRHADVASLRDETEEDPKELAASKFDLNYIALDGEIGCMVNGAGLAMATMDIIKLYGAEPANFLDVGGGATKEKVTEAFKIITSDPQVKGIFVNIFGGIMRCDIIAEGVIAAVKEVGLQMPLVVRLEGTNVEKGKEIINNSGLDVIAADDLKDGAQKIVKAVKG.

An ATP-grasp domain is found at 9-254; the sequence is KALLAQYGAP…ETEEDPKELA (246 aa). Residues K46, 53-55, E109, S112, and E117 contribute to the ATP site; that span reads GRG. The Mg(2+) site is built by N209 and D223. Residues N274 and 331 to 333 each bind substrate; that span reads GIM.

It belongs to the succinate/malate CoA ligase beta subunit family. As to quaternary structure, heterotetramer of two alpha and two beta subunits. It depends on Mg(2+) as a cofactor.

The enzyme catalyses succinate + ATP + CoA = succinyl-CoA + ADP + phosphate. It carries out the reaction GTP + succinate + CoA = succinyl-CoA + GDP + phosphate. The protein operates within carbohydrate metabolism; tricarboxylic acid cycle; succinate from succinyl-CoA (ligase route): step 1/1. In terms of biological role, succinyl-CoA synthetase functions in the citric acid cycle (TCA), coupling the hydrolysis of succinyl-CoA to the synthesis of either ATP or GTP and thus represents the only step of substrate-level phosphorylation in the TCA. The beta subunit provides nucleotide specificity of the enzyme and binds the substrate succinate, while the binding sites for coenzyme A and phosphate are found in the alpha subunit. The protein is Succinate--CoA ligase [ADP-forming] subunit beta of Jannaschia sp. (strain CCS1).